A 2146-amino-acid chain; its full sequence is YLP motif-containing protein 1 (2146 aa).

2 disordered regions span residues 1 to 381 (MYPN…ARLK) and 562 to 880 (PPVM…FKMQ). Residues 14-26 (YPPPPVPPPPPVA) are compositionally biased toward pro residues. Composition is skewed to low complexity over residues 27-48 (LPEA…PSSS) and 58-79 (LAQL…LQPH). Composition is skewed to pro residues over residues 80 to 92 (HLPP…PPVM), 101 to 113 (QPPP…PPGP), 147 to 157 (PESPPVPPGSY), 165 to 175 (MPPPQPPPSYY), and 183 to 194 (YLPPAQPSPSQS). Positions 195-237 (PPSQSYLAPTPSYSSSSSSSQSYLSHSQSYLPSSQASPSRPSQ) are enriched in low complexity. Composition is skewed to polar residues over residues 256 to 279 (NKTT…QQQA) and 286 to 308 (STMT…LQQR). Basic residues predominate over residues 309–319 (TKVHLPGHKKG). Basic and acidic residues predominate over residues 325 to 334 (DTPEPVKEEV). 3 stretches are compositionally biased toward pro residues: residues 349–368 (EEPP…PPEE), 562–579 (PPVM…PGMP), and 586–642 (GPPP…PQGI). Residues 643–663 (PPQLTAAPVPPASSSQSSQVP) are compositionally biased toward low complexity. Polar residues predominate over residues 692–702 (AGPSEQVNSKA). Lys-735 carries the N6-methyllysine modification. At Ser-756 the chain carries Phosphoserine. Basic and acidic residues predominate over residues 758–806 (RGPRFDGPRRFEDLGSRCEGPRPKGPRFEGNRPDGPRPRYEGHPAEGTK). Omega-N-methylarginine is present on Arg-814. Polar residues-rich tracts occupy residues 820–835 (FYIT…QSGP) and 868–880 (DTSS…FKMQ). Ser-829 is subject to Phosphoserine. Omega-N-methylarginine is present on Arg-831. Lys-891 participates in a covalent cross-link: Glycyl lysine isopeptide (Lys-Gly) (interchain with G-Cter in SUMO2). Disordered regions lie at residues 895–1211 (AAQS…GRNA) and 1243–1351 (NRED…DDRW). 2 stretches are compositionally biased toward polar residues: residues 896–909 (AQSN…QQEP) and 923–933 (NWDQNVQSMET). Lys-983 is covalently cross-linked (Glycyl lysine isopeptide (Lys-Gly) (interchain with G-Cter in SUMO1); alternate). Residue Lys-983 forms a Glycyl lysine isopeptide (Lys-Gly) (interchain with G-Cter in SUMO2); alternate linkage. 3 stretches are compositionally biased toward basic and acidic residues: residues 994 to 1012 (NNQD…RLEG), 1027 to 1036 (RMEDTRDKGL), and 1053 to 1093 (KQED…REKV). A Glycyl lysine isopeptide (Lys-Gly) (interchain with G-Cter in SUMO1); alternate cross-link involves residue Lys-1053. Lys-1053 participates in a covalent cross-link: Glycyl lysine isopeptide (Lys-Gly) (interchain with G-Cter in SUMO2); alternate. Ser-1100 and Ser-1119 each carry phosphoserine. Composition is skewed to basic and acidic residues over residues 1129-1211 (GSRE…GRNA) and 1243-1264 (NRED…RGPW). Acidic residues predominate over residues 1266 to 1276 (DDWERDQDMDE). Over residues 1277–1328 (DYNREMERDMDRDVDRISRPMDMYDRSLDNEWDRDYGRPLDEQESQFRERDI) the composition is skewed to basic and acidic residues. Residues 1330-1342 (SLPPLPPLPPLPP) show a composition bias toward pro residues. A Phosphoserine modification is found at Ser-1402. 3 disordered regions span residues 1407 to 1438 (PSDV…SLDS), 1469 to 1573 (QKEQ…EQER), and 1602 to 1828 (IPSA…PPGR). Residues 1417–1430 (AEHMPSSHHSSEMM) are compositionally biased toward low complexity. A compositionally biased stretch (basic and acidic residues) spans 1469-1480 (QKEQLQKMKDFG). Positions 1505–1520 (MYPPPGSYRPPPPMGK) are enriched in pro residues. Low complexity predominate over residues 1521 to 1539 (PPGSIVRPSAPPARSSVPV). Pro residues-rich tracts occupy residues 1540–1562 (TRPP…PPVI) and 1606–1636 (PVLP…PPPV). Residue Lys-1652 forms a Glycyl lysine isopeptide (Lys-Gly) (interchain with G-Cter in SUMO2) linkage. Basic and acidic residues-rich tracts occupy residues 1662 to 1696 (ITLR…EPYF), 1704 to 1774 (ADHR…DRPV), 1783 to 1793 (GERRTYPEERM), and 1809 to 1828 (RVEK…PPGR). A Glycyl lysine isopeptide (Lys-Gly) (interchain with G-Cter in SUMO2) cross-link involves residue Lys-1710. The involved in interaction with PPP1CA stretch occupies residues 2096–2103 (KKRVRWAD).

In terms of assembly, interacts with PPP1CA and NCOA5. Forms a complex with ILF2, ILF3, KHDRBS1, RBMX, NCOA5 and PPP1CA. Expressed in neuronal, neuroblastoma and embryonic kidney cell lines (at protein level).

It localises to the nucleus. It is found in the nucleus speckle. Its function is as follows. Plays a role in the reduction of telomerase activity during differentiation of embryonic stem cells by binding to the core promoter of TERT and controlling its down-regulation. In Homo sapiens (Human), this protein is YLP motif-containing protein 1 (YLPM1).